Consider the following 648-residue polypeptide: Probable alpha-galactosidase D (648 aa).

Positions 1-16 are cleaved as a signal peptide; the sequence is MEFIVSLLLLSPALVA. N-linked (GlcNAc...) asparagine glycosylation is found at N84 and N90. A disulfide bridge connects residues C123 and C156. Catalysis depends on D154, which acts as the Nucleophile. Substrate is bound at residue 199–203; it reads EWGID. The active-site Proton donor is the D221. N-linked (GlcNAc...) asparagine glycosylation is found at N339, N350, N505, and N572.

This sequence belongs to the glycosyl hydrolase 27 family.

Its subcellular location is the secreted. It catalyses the reaction Hydrolysis of terminal, non-reducing alpha-D-galactose residues in alpha-D-galactosides, including galactose oligosaccharides, galactomannans and galactolipids.. Hydrolyzes a variety of simple alpha-D-galactoside as well as more complex molecules such as oligosaccharides and polysaccharides. This Aspergillus fumigatus (strain CBS 144.89 / FGSC A1163 / CEA10) (Neosartorya fumigata) protein is Probable alpha-galactosidase D (aglD).